A 968-amino-acid chain; its full sequence is RNA polymerase-associated protein RapA (968 aa).

Positions 164–334 (DVGRRHAPRV…FARLRLLDPN (171 aa)) constitute a Helicase ATP-binding domain. 177-184 (DEVGLGKT) provides a ligand contact to ATP. The short motif at 280–283 (DEAH) is the DEAH box element. Residues 490–662 (RVEWLMGYLT…YLASPDQTEG (173 aa)) enclose the Helicase C-terminal domain.

This sequence belongs to the SNF2/RAD54 helicase family. RapA subfamily. Interacts with the RNAP. Has a higher affinity for the core RNAP than for the holoenzyme. Its ATPase activity is stimulated by binding to RNAP.

In terms of biological role, transcription regulator that activates transcription by stimulating RNA polymerase (RNAP) recycling in case of stress conditions such as supercoiled DNA or high salt concentrations. Probably acts by releasing the RNAP, when it is trapped or immobilized on tightly supercoiled DNA. Does not activate transcription on linear DNA. Probably not involved in DNA repair. The chain is RNA polymerase-associated protein RapA from Escherichia coli O1:K1 / APEC.